Reading from the N-terminus, the 68-residue chain is Erythrodihydroneopterin triphosphate synthetase (68 aa).

Position 66 is a phosphoserine (S66).

The chain is Erythrodihydroneopterin triphosphate synthetase from Cavia porcellus (Guinea pig).